The sequence spans 272 residues: GTP cyclohydrolase FolE2 (272 aa).

It belongs to the GTP cyclohydrolase IV family.

It carries out the reaction GTP + H2O = 7,8-dihydroneopterin 3'-triphosphate + formate + H(+). Its pathway is cofactor biosynthesis; 7,8-dihydroneopterin triphosphate biosynthesis; 7,8-dihydroneopterin triphosphate from GTP: step 1/1. In terms of biological role, converts GTP to 7,8-dihydroneopterin triphosphate. This Aromatoleum aromaticum (strain DSM 19018 / LMG 30748 / EbN1) (Azoarcus sp. (strain EbN1)) protein is GTP cyclohydrolase FolE2.